Reading from the N-terminus, the 50-residue chain is Thrombin-like enzyme BpirSP27 (50 aa).

One can recognise a Peptidase S1 domain in the interval 1–50; it reads VVGGDECNINEHRSLVAIFNSTGFFCSGILLNQEWVLTASHCDSTNFQMK. N-linked (GlcNAc...) asparagine glycosylation occurs at asparagine 20. Cysteine 26 and cysteine 42 are disulfide-bonded. Histidine 41 acts as the Charge relay system in catalysis.

It belongs to the peptidase S1 family. Snake venom subfamily. In terms of assembly, monomer. N-glycosylated. As to expression, expressed by the venom gland.

Its subcellular location is the secreted. Inhibited by serine protease inhibitors PMSF, benzamidine, leupeptin and aprotinin, as well as by copper (Cu2+) and manganese (Mn2+) ions. Not inhibited by metalloprotease inhibitors EDTA, EGTA and 1,10-phenanthroline, as well as by barium (Ba2+) and calcium ion (Ca2+). In terms of biological role, snake venom serine protease that interferes with the hemostatic system of the prey. It preferentially degrades the Bbeta chain (FGB) of fibrinogen, with minor effects on the Aalpha chain (FGA). It presents a lower ability to degrade fibrin clots than BpirSP41. It hydrolyzes chromogenic substrates S-2238 (used for testing thrombin activity), S-2222 (factor Xa), S-2266 (glandular kallikrein and factor XIa), S-2302 (plasma kallikrein, factor XIa and XIIa), and S-2251 (plasmin). It shows a decrease in the clotting time of human plasma in the presence of increasing doses of the enzyme. Its minimum coagulant dose (MCD) is 3.5 ug. It also promotes platelet aggregation in a concentration-dependent manner in the presence or absence of calcium. It also shows 20% inhibition of the hemolytic activity promoted by the complement pathways and possess only a minor role in the induction of edema and pain in rat. This Bothrops pirajai (Piraja's lancehead) protein is Thrombin-like enzyme BpirSP27.